We begin with the raw amino-acid sequence, 723 residues long: ESX-1 secretion-associated protein EspK (723 aa).

2 disordered regions span residues 175–360 and 393–451; these read DLLQ…TPAA and SGAG…GTPV. Over residues 200–209 the composition is skewed to low complexity; the sequence is TPGTPITPGT. The span at 210-229 shows a compositional bias: pro residues; that stretch reads PITPIPGAPVTPITPTPGTP. The segment covering 230–249 has biased composition (low complexity); the sequence is VTPVTPGKPVTPVTPVKPGT. 2 stretches are compositionally biased toward pro residues: residues 250 to 265 and 274 to 308; these read PGEPTPITPVTPPVAP and PVTPAPAPHPQPAPAPAPSPGPQPVTPATPGPSGP. Composition is skewed to low complexity over residues 309–319, 393–404, and 412–426; these read ATPGTPGGEPA, SGAGSHAATGRA, and AAAPSTRAASARTAP. A compositionally biased stretch (basic and acidic residues) spans 432–444; that stretch reads STDHIDKPDRSES.

It localises to the cytoplasm. In terms of biological role, may act as a chaperone that facilitates EspB secretion through an interaction with EccCb1. This is ESX-1 secretion-associated protein EspK from Mycobacterium tuberculosis (strain CDC 1551 / Oshkosh).